The chain runs to 450 residues: Glucose-6-phosphate isomerase (450 aa).

Glu290 serves as the catalytic Proton donor. Active-site residues include His311 and Lys425.

Belongs to the GPI family.

It is found in the cytoplasm. It carries out the reaction alpha-D-glucose 6-phosphate = beta-D-fructose 6-phosphate. It functions in the pathway carbohydrate biosynthesis; gluconeogenesis. The protein operates within carbohydrate degradation; glycolysis; D-glyceraldehyde 3-phosphate and glycerone phosphate from D-glucose: step 2/4. In terms of biological role, catalyzes the reversible isomerization of glucose-6-phosphate to fructose-6-phosphate. The protein is Glucose-6-phosphate isomerase of Alkaliphilus metalliredigens (strain QYMF).